The chain runs to 185 residues: ATP-dependent protease subunit HslV (185 aa).

Thr-12 is an active-site residue. Ala-168, Cys-171, and Thr-174 together coordinate Na(+).

The protein belongs to the peptidase T1B family. HslV subfamily. In terms of assembly, a double ring-shaped homohexamer of HslV is capped on each side by a ring-shaped HslU homohexamer. The assembly of the HslU/HslV complex is dependent on binding of ATP.

It is found in the cytoplasm. The enzyme catalyses ATP-dependent cleavage of peptide bonds with broad specificity.. Its activity is regulated as follows. Allosterically activated by HslU binding. Its function is as follows. Protease subunit of a proteasome-like degradation complex believed to be a general protein degrading machinery. This chain is ATP-dependent protease subunit HslV, found in Cereibacter sphaeroides (strain ATCC 17029 / ATH 2.4.9) (Rhodobacter sphaeroides).